Here is a 533-residue protein sequence, read N- to C-terminus: MSIQIEHPAGGYKKLFETVEELSSPLTAHVTGRIPLWLTGSLLRCGPGLFEVGSEPFYHLFDGQALLHKFDFKEGHVTYHRRFIRTDAYVRAMTEKRIVITEFGTCAFPDPCKNIFSRFFSYFKGVEVTDNALVNIYPVGEDYYACTETNFITKINPETLETIKQVDLCNYISVNGATAHPHIESDGTVYNIGNCFGKNFTVAYNIIKIPPLKADKEDPINKSEVVVQFPCSDRFKPSYVHSFGLTPNYIVFVETPVKINLFKFLSSWSLWGANYMDCFESNESMGVWLHVADKKRRKYFNNKYRTSPFNLFHHINTYEDNGFLIVDLCCWKGFEFVYNYLYLANLRENWEEVKRNAMKAPQPEVRRYVLPLTIDKVDTGRNLVTLPHTTATATLRSDETIWLEPEVLFSGPRQAFEFPQINYQKFGGKPYTYAYGLGLNHFVPDKLCKMNVKTKEIWMWQEPDSYPSEPIFVSQPDALEEDDGVVLSVVVSPGAGQKPAYLLVLNAKDLSEIARAEVETNIPVTFHGLFKRS.

At serine 2 the chain carries N-acetylserine. A phosphothreonine mark is found at threonine 101 and threonine 105. A lipid anchor (S-palmitoyl cysteine; in membrane form) is attached at cysteine 112. Lysine 113 carries the N6-acetyllysine modification. The residue at position 117 (serine 117) is a Phosphoserine. Histidine 180 is a binding site for Fe cation. The S-palmitoyl cysteine; in membrane form moiety is linked to residue cysteine 231. Histidine 241 and histidine 313 together coordinate Fe cation. 2 S-palmitoyl cysteine; in membrane form lipidation sites follow: cysteine 329 and cysteine 330. Histidine 527 is a binding site for Fe cation.

The protein belongs to the carotenoid oxygenase family. Interacts with MYO7A; this mediates light-dependent intracellular transport of RPE65. It depends on Fe(2+) as a cofactor. In terms of processing, palmitoylation by LRAT regulates ligand binding specificity; the palmitoylated form (membrane form) specifically binds all-trans-retinyl-palmitate, while the soluble unpalmitoylated form binds all-trans-retinol (vitamin A). Retinal pigment epithelium specific.

It is found in the cytoplasm. It localises to the cell membrane. The protein resides in the microsome membrane. The catalysed reaction is an all-trans-retinyl ester + H2O = 11-cis-retinol + a fatty acid + H(+). It carries out the reaction lutein = (3R,3'S)-zeaxanthin. The enzyme catalyses all-trans-retinyl hexadecanoate + H2O = 11-cis-retinol + hexadecanoate + H(+). Critical isomerohydrolase in the retinoid cycle involved in regeneration of 11-cis-retinal, the chromophore of rod and cone opsins. Catalyzes the cleavage and isomerization of all-trans-retinyl fatty acid esters to 11-cis-retinol which is further oxidized by 11-cis retinol dehydrogenase to 11-cis-retinal for use as visual chromophore. Essential for the production of 11-cis retinal for both rod and cone photoreceptors. Also capable of catalyzing the isomerization of lutein to meso-zeaxanthin an eye-specific carotenoid. The soluble form binds vitamin A (all-trans-retinol), making it available for LRAT processing to all-trans-retinyl ester. The membrane form, palmitoylated by LRAT, binds all-trans-retinyl esters, making them available for IMH (isomerohydrolase) processing to all-cis-retinol. The soluble form is regenerated by transferring its palmitoyl groups onto 11-cis-retinol, a reaction catalyzed by LRAT. The sequence is that of Retinoid isomerohydrolase (Rpe65) from Mus musculus (Mouse).